A 284-amino-acid polypeptide reads, in one-letter code: Tropomyosin (284 aa).

Positions 1–284 (MEAIKNKMQA…DQTFAELTGY (284 aa)) form a coiled coil.

Belongs to the tropomyosin family. Homodimer.

Its function is as follows. Tropomyosin, in association with the troponin complex, plays a central role in the calcium dependent regulation of muscle contraction. The protein is Tropomyosin of Dermatophagoides pteronyssinus (European house dust mite).